The sequence spans 281 residues: Glycerol uptake facilitator protein (281 aa).

Over 1-5 (MSQTS) the chain is Cytoplasmic. The helical transmembrane segment at 6-34 (TLKGQCIAEFLGTGLLIFFGVGCVAALKV) threads the bilayer. Residues 35–39 (AGASF) lie on the Periplasmic side of the membrane. A helical membrane pass occupies residues 40–60 (GQWEISVIWGLGVAMAIYLTA). The Cytoplasmic portion of the chain corresponds to 61-63 (GVS). The stretch at 64 to 67 (GAHL) is an intramembrane region. The short motif at 68 to 70 (NPA) is the NPA 1 element. The segment at residues 68 to 78 (NPAVTIALWLF) is an intramembrane region (helical). Topologically, residues 79–84 (ACFDKR) are cytoplasmic. A helical transmembrane segment spans residues 85–108 (KVIPFIVSQVAGAFCAAALVYGLY). Residues 109-143 (YNLFFDFEQTHHIVRGSVESVDLAGTFSTYPNPHI) lie on the Periplasmic side of the membrane. Residues 144–169 (NFVQAFAVEMVITAILMGLILALTDD) form a helical membrane-spanning segment. The Cytoplasmic segment spans residues 170 to 177 (GNGVPRGP). A helical transmembrane segment spans residues 178-194 (LAPLLIGLLIAVIGASM). Topologically, residues 195–198 (GPLT) are periplasmic. Residues 199–202 (GFAM) lie within the membrane without spanning it. Positions 203–205 (NPA) match the NPA 2 motif. Positions 203–216 (NPARDFGPKVFAWL) form an intramembrane region, helical. The Periplasmic segment spans residues 217–231 (AGWGNVAFTGGRDIP). The chain crosses the membrane as a helical span at residues 232–254 (YFLVPLFSPIVGAIVGAFAYRKL). Residues 255–281 (IGRHLPCDICVVEEKETTTPSEQKASL) are Cytoplasmic-facing.

The protein belongs to the MIP/aquaporin (TC 1.A.8) family. As to quaternary structure, homotetramer.

The protein resides in the cell inner membrane. It carries out the reaction glycerol(in) = glycerol(out). In terms of biological role, mediates glycerol diffusion across the cytoplasmic membrane via a pore-type mechanism. The chain is Glycerol uptake facilitator protein (glpF) from Shigella flexneri.